The following is a 442-amino-acid chain: Small RNA 2'-O-methyltransferase (442 aa).

S-adenosyl-L-methionine contacts are provided by G125 and D151. The Mg(2+) site is built by E209, E212, H213, and H260.

The protein belongs to the methyltransferase superfamily. HEN1 family. Mg(2+) is required as a cofactor. In terms of tissue distribution, broadly expressed in the germline and somatic tissues in both hermaphrodites and males.

It is found in the cytoplasm. The protein resides in the nucleus. Its subcellular location is the nucleoplasm. It localises to the cytoplasmic granule. It catalyses the reaction small RNA 3'-end nucleotide + S-adenosyl-L-methionine = small RNA 3'-end 2'-O-methylnucleotide + S-adenosyl-L-homocysteine + H(+). Methyltransferase that adds a 2'-O-methyl group at the 3'-end of PIWI-interacting RNAs (piRNAs) and small interfering RNAs (siRNAs) which are classes of regulatory RNAs that are involved in gene silencing in endogenous RNA interference (RNAi) pathways. Methylation protects the 3'-end of small RNAs from tailing and trimming and could constitute a recognition signal for appropriate argonaute machineries. Methylates and stabilizes 26G-siRNAs (a class of 26 nucleotide siRNAs that possess a monophosphorylated guanine residue at the 5'-end) when they are bound by argonaute protein ergo-1. This occurs in the female germline and embryo, but not in the male germline. Does not methylate 26G-siRNAs bound by argonaute proteins alg-3 or alg-4. Methylates and stabilizes 21U-piRNAs, which are a class of 21 nucleotide piRNAs that possess a uracil residue at the 5'-end, in the male and female germline. In addition, may play a role in exogenous RNAi (exoRNAi) pathways in the germline. The polypeptide is Small RNA 2'-O-methyltransferase (Caenorhabditis elegans).